The sequence spans 137 residues: Putative pre-16S rRNA nuclease (137 aa).

Belongs to the YqgF nuclease family.

It localises to the cytoplasm. Its function is as follows. Could be a nuclease involved in processing of the 5'-end of pre-16S rRNA. This Clostridium botulinum (strain Eklund 17B / Type B) protein is Putative pre-16S rRNA nuclease.